Consider the following 96-residue polypeptide: UPF0235 protein KPK_0722 (96 aa).

This sequence belongs to the UPF0235 family.

This chain is UPF0235 protein KPK_0722, found in Klebsiella pneumoniae (strain 342).